Here is a 159-residue protein sequence, read N- to C-terminus: Cyclic pyranopterin monophosphate synthase (159 aa).

Substrate-binding positions include 75 to 77 and 113 to 114; these read LCH and ME. Aspartate 128 is a catalytic residue.

This sequence belongs to the MoaC family. As to quaternary structure, homohexamer; trimer of dimers.

The enzyme catalyses (8S)-3',8-cyclo-7,8-dihydroguanosine 5'-triphosphate = cyclic pyranopterin phosphate + diphosphate. It participates in cofactor biosynthesis; molybdopterin biosynthesis. In terms of biological role, catalyzes the conversion of (8S)-3',8-cyclo-7,8-dihydroguanosine 5'-triphosphate to cyclic pyranopterin monophosphate (cPMP). The protein is Cyclic pyranopterin monophosphate synthase of Aliivibrio salmonicida (strain LFI1238) (Vibrio salmonicida (strain LFI1238)).